Consider the following 634-residue polypeptide: Dynein axonemal assembly factor 1 (634 aa).

A disordered region spans residues 1-80; sequence MHPEVSEPPV…SRDDREDRGP (80 aa). Residues 22 to 42 are compositionally biased toward basic and acidic residues; it reads AGDHGDAGPGIRKEEISETKE. Over residues 48–62 the composition is skewed to polar residues; it reads CTTSCPSQQQPSGDN. Residues 70–80 show a composition bias toward basic and acidic residues; sequence HSRDDREDRGP. 6 LRR repeats span residues 101-123, 124-145, 146-167, 168-189, 190-211, and 215-236; these read ALND…EEYT, GLRC…QAQS, ELRC…EPLQ, KLDA…SCLP, VLNT…EHLR, and RLCV…SVLE. The 40-residue stretch at 249 to 288 folds into the LRRCT domain; it reads NPVTKHIPNYRRTVTVRLKHLTYLDDRPVFPKDRACAEAW. Residues 326–336 show a composition bias toward basic and acidic residues; the sequence is EERKKARDRGE. The tract at residues 326–358 is disordered; the sequence is EERKKARDRGETPLPDSEGSIPTSPEAEEKQPM. Ser-349 is subject to Phosphoserine. Thr-462 is subject to Phosphothreonine. Residues Ser-465 and Ser-488 each carry the phosphoserine modification. 2 disordered regions span residues 481–505 and 559–634; these read ISSL…ATPT and ELND…FGLD.

It belongs to the DNAAF1 family.

The protein localises to the cell projection. Its subcellular location is the cilium. Functionally, cilium-specific protein required for the stability of the ciliary architecture. Plays a role in cytoplasmic preassembly of dynein arms. Involved in regulation of microtubule-based cilia and actin-based brush border microvilli. This is Dynein axonemal assembly factor 1 (Dnaaf1) from Mus musculus (Mouse).